Consider the following 192-residue polypeptide: Protein GrpE (192 aa).

The interval 1–41 is disordered; the sequence is MSKEEFPHEKDLKDEVTPDKAPKKDPKAAPKEEVKENPVEN.

This sequence belongs to the GrpE family. In terms of assembly, homodimer.

It is found in the cytoplasm. In terms of biological role, participates actively in the response to hyperosmotic and heat shock by preventing the aggregation of stress-denatured proteins, in association with DnaK and GrpE. It is the nucleotide exchange factor for DnaK and may function as a thermosensor. Unfolded proteins bind initially to DnaJ; upon interaction with the DnaJ-bound protein, DnaK hydrolyzes its bound ATP, resulting in the formation of a stable complex. GrpE releases ADP from DnaK; ATP binding to DnaK triggers the release of the substrate protein, thus completing the reaction cycle. Several rounds of ATP-dependent interactions between DnaJ, DnaK and GrpE are required for fully efficient folding. This chain is Protein GrpE, found in Lactobacillus johnsonii (strain CNCM I-12250 / La1 / NCC 533).